Reading from the N-terminus, the 338-residue chain is GTPase Obg (338 aa).

The Obg domain maps to 1–159 (MSFIDEVKIN…RWIRMELKLM (159 aa)). Residues 58 to 79 (DLRQHPHQKAGRGKNGMGSDRH) are disordered. The OBG-type G domain occupies 160–331 (ADVGLLGMPS…LLDDIAFNLW (172 aa)). Residues 166–173 (GMPSVGKS), 191–195 (FTTLK), 213–216 (DIPG), 283–286 (NKID), and 312–314 (SAA) each bind GTP. Mg(2+)-binding residues include Ser-173 and Thr-193.

Belongs to the TRAFAC class OBG-HflX-like GTPase superfamily. OBG GTPase family. In terms of assembly, monomer. It depends on Mg(2+) as a cofactor.

It is found in the cytoplasm. In terms of biological role, an essential GTPase which binds GTP, GDP and possibly (p)ppGpp with moderate affinity, with high nucleotide exchange rates and a fairly low GTP hydrolysis rate. Plays a role in control of the cell cycle, stress response, ribosome biogenesis and in those bacteria that undergo differentiation, in morphogenesis control. The sequence is that of GTPase Obg from Citrifermentans bemidjiense (strain ATCC BAA-1014 / DSM 16622 / JCM 12645 / Bem) (Geobacter bemidjiensis).